Here is a 93-residue protein sequence, read N- to C-terminus: Sm-like protein LSM2 (93 aa).

The 75-residue stretch at 2–76 (LFFSYFKDLV…VRYVQLPKDG (75 aa)) folds into the Sm domain.

Belongs to the snRNP Sm proteins family. As to quaternary structure, component of the heptameric LSM1-LSM7 complex that forms a seven-membered ring structure with a donut shape. The LSM subunits are arranged in the order LSM1, LSM2, LSM3, LSM6, LSM5, LSM7 and LSM4. LSM2 subunit interacts only with its two neighboring subunits, LSM1A or LSM1B and LSM3A or LSM3B. Component of the heptameric LSM2-LSM8 complex that forms a seven-membered ring structure with a donut shape. The LSM subunits are arranged in the order LSM8, LSM2, LSM3, LSM6, LSM5, LSM7 and LSM4. LSM2 subunit interacts only with its two neighboring subunits, LSM8 and LSM3A or LSM3B. As to expression, expressed in roots, leaves, stems, flowers and siliques.

The protein resides in the cytoplasm. The protein localises to the nucleus. Functionally, component of LSM protein complexes, which are involved in RNA processing. Component of the cytoplasmic LSM1-LSM7 complex which is involved in mRNA degradation by promoting decapping and leading to accurate 5'-3' mRNA decay. The cytoplasmic LSM1-LSM7 complex regulates developmental gene expression by the decapping of specific development-related transcripts. Component of the nuclear LSM2-LSM8 complex which is involved splicing nuclear mRNAs. LSM2-LSM8 binds directly to the U6 small nuclear RNAs (snRNAs) and is essential for accurate splicing of selected development-related mRNAs through the stabilization of the spliceosomal U6 snRNA. Plays a critical role in the regulation of development-related gene expression. In Arabidopsis thaliana (Mouse-ear cress), this protein is Sm-like protein LSM2.